The sequence spans 205 residues: Small ribosomal subunit protein uS4 (205 aa).

One can recognise an S4 RNA-binding domain in the interval 95–163 (RRLDNVVYRL…FKENLESRDP (69 aa)).

It belongs to the universal ribosomal protein uS4 family. As to quaternary structure, part of the 30S ribosomal subunit. Contacts protein S5. The interaction surface between S4 and S5 is involved in control of translational fidelity.

One of the primary rRNA binding proteins, it binds directly to 16S rRNA where it nucleates assembly of the body of the 30S subunit. Functionally, with S5 and S12 plays an important role in translational accuracy. In Persephonella marina (strain DSM 14350 / EX-H1), this protein is Small ribosomal subunit protein uS4.